The chain runs to 245 residues: Ribonuclease 3 (245 aa).

Positions 24–146 constitute an RNase III domain; sequence YAVFLQKLGY…IIGAIYLESG (123 aa). Position 59 (glutamate 59) interacts with Mg(2+). Aspartate 63 is a catalytic residue. Residues asparagine 132 and glutamate 135 each coordinate Mg(2+). Glutamate 135 is a catalytic residue. The DRBM domain occupies 173–243; the sequence is DSKTLLQEYL…ARQAYELAIV (71 aa).

Belongs to the ribonuclease III family. In terms of assembly, homodimer. Mg(2+) is required as a cofactor.

It localises to the cytoplasm. The catalysed reaction is Endonucleolytic cleavage to 5'-phosphomonoester.. Digests double-stranded RNA. Involved in the processing of primary rRNA transcript to yield the immediate precursors to the large and small rRNAs (23S and 16S). Processes some mRNAs, and tRNAs when they are encoded in the rRNA operon. Processes pre-crRNA and tracrRNA of type II CRISPR loci if present in the organism. The polypeptide is Ribonuclease 3 (Nitrosomonas europaea (strain ATCC 19718 / CIP 103999 / KCTC 2705 / NBRC 14298)).